A 236-amino-acid chain; its full sequence is Small ribosomal subunit protein uS3 (236 aa).

Positions 39 to 107 (VRQFLTKELK…PAQINISEVR (69 aa)) constitute a KH type-2 domain.

It belongs to the universal ribosomal protein uS3 family. As to quaternary structure, part of the 30S ribosomal subunit. Forms a tight complex with proteins S10 and S14.

In terms of biological role, binds the lower part of the 30S subunit head. Binds mRNA in the 70S ribosome, positioning it for translation. The chain is Small ribosomal subunit protein uS3 from Aeromonas salmonicida (strain A449).